We begin with the raw amino-acid sequence, 839 residues long: MPRLDVEKTIEELSLGEKVALTAGIDFWHTASVPRLNIPTLRMSDGPNGVRGTRFFNGVPAACFPCATALGATWDTELLHEIGQLMGEESIAKGSHIILGPTINTQRSPLGGRGFESFAEDGVLSGLLAGYISKGIQEKGVAATLKHFVCNDQEHQRMAVDSIVTQRALREIYLLPFQLAMRICRTACVMTAYNKVNGTHVSQNKEIITDILRKEWGWDGLVMSDWFGTYSTSDAINAGLDLEMPGKTRWRGTALAHAVSSNEVAEFVMDERVRNVLNLVNFVDGLNIPENAPEKALNRPQDQALLRRAAAESVVLMKNEEDILPLKKEKSILVIGPNSKVAAYCGGGSASLDAYYTVNPFEGVSAQSKGEVKFSQGVYSHKDLPLLGPLLKTADGKTGFSFKVYNEHPSESNRELIEQLHLVSSSGFLMDYVNPKIKSLTYYVDMEGLFTPEEDGVYDFGVTVVGTGQLFIDGELVVDNTKNQRQGSAFFGSATVEEKGSKELKAGQTYKVLFQFGTAPTSDLDTRGVVVFGPGGFRFGASRRVGQEELISNAVKLASEAEQVVVFAGLTSEWETEGYDRDHMDLPPGSDEMISRVLDVNPNAVVVIQSGTPVTMPWANKTKALLHAWFGGNECGNGIADVLYGDVNPSGKLPITFPVRLQDNPSYVNFRSERGRVLYGEDVYVGYRYYEKVDLAPLFPFGHGLSYTTFTRSDLTLTTTPEKPQYEESGEPITATVTVTNTGKVAGAEIVQLWVAPPATEVNRPVRELKGFTKVFLQPGEQKKVEIVVEKKLATSWFDEMREKWASEKGEYGVLVTGTGEGVLKSSFKVEKTRYWLGL.

Asparagine 197 carries an N-linked (GlcNAc...) asparagine glycan. The active site involves aspartate 225. The 161-residue stretch at aspartate 395–valine 555 folds into the PA14 domain. The N-linked (GlcNAc...) asparagine glycan is linked to asparagine 620.

It belongs to the glycosyl hydrolase 3 family.

Its subcellular location is the secreted. It carries out the reaction Hydrolysis of terminal, non-reducing beta-D-glucosyl residues with release of beta-D-glucose.. The protein operates within glycan metabolism; cellulose degradation. Functionally, beta-glucosidases are one of a number of cellulolytic enzymes involved in the degradation of cellulosic biomass. Catalyzes the last step releasing glucose from the inhibitory cellobiose. The protein is Probable beta-glucosidase I (bglI) of Aspergillus flavus (strain ATCC 200026 / FGSC A1120 / IAM 13836 / NRRL 3357 / JCM 12722 / SRRC 167).